We begin with the raw amino-acid sequence, 280 residues long: F-box only protein 27 (280 aa).

The disordered stretch occupies residues 1 to 26; that stretch reads MGAWASRGRAARVPAPEPESEPEEAL. One can recognise an F-box domain in the interval 25–72; that stretch reads ALDLSQLPPELLLVVLSHVPPRTLLGRCRQVCRGWRALVDGQALWLLI. One can recognise an FBA domain in the interval 100 to 277; it reads PCPLGRFCAR…VTNSSVIVRV (178 aa).

In terms of assembly, part of a SCF (SKP1-cullin-F-box) protein ligase complex. Interacts with SKP1 and CUL1.

Functionally, substrate-recognition component of the SCF (SKP1-CUL1-F-box protein)-type E3 ubiquitin ligase complex. Able to recognize and bind complex-type oligosaccharides. This Macaca fascicularis (Crab-eating macaque) protein is F-box only protein 27 (FBXO27).